Here is a 78-residue protein sequence, read N- to C-terminus: Probable [Fe-S]-dependent transcriptional repressor (78 aa).

The iron-sulfur cluster site is built by C56, C61, C64, and C70.

Belongs to the FeoC family.

In terms of biological role, may function as a transcriptional regulator that controls feoABC expression. This is Probable [Fe-S]-dependent transcriptional repressor from Escherichia fergusonii (strain ATCC 35469 / DSM 13698 / CCUG 18766 / IAM 14443 / JCM 21226 / LMG 7866 / NBRC 102419 / NCTC 12128 / CDC 0568-73).